The chain runs to 405 residues: NAC transcription factor NAM-A1 (405 aa).

The span at 1–10 shows a compositional bias: low complexity; sequence MGSSDSSSGS. The tract at residues 1–38 is disordered; that stretch reads MGSSDSSSGSAQKAARHQHEPPPPRQRGSAPELPPGFR. An NAC domain is found at 33–204; it reads LPPGFRFHPT…DWVLCRIYKK (172 aa). The DNA-binding element occupies 137–210; that stretch reads LGVKKALVFY…IYKKINKAAA (74 aa).

In terms of tissue distribution, expressed in flag leaves, green spikes and peduncles.

Its subcellular location is the nucleus. Its function is as follows. Transcription factor of the NAC family associated with the grain protein content (GPC). Accelerates senescence and increases nutrient remobilization from leaves to developing grains. The tetraploid cultivated wheat (T.durum) contains one additional gene coding for a functional protein (NAM-B2) and one extra pseudogene (NAM-B1). The sequence is that of NAC transcription factor NAM-A1 (NAM-A1) from Triticum turgidum subsp. durum (Durum wheat).